We begin with the raw amino-acid sequence, 143 residues long: Hemoglobin subunit alpha-1 (143 aa).

Residue S2 is modified to N-acetylserine. In terms of domain architecture, Globin spans 2–143 (SLSTKDKETV…VSLALAEKYR (142 aa)). Residue H60 coordinates O2. H89 contacts heme b.

The protein belongs to the globin family. As to quaternary structure, hb1 is a heterotetramer of two alpha-1 chains and two beta-1 chains. Red blood cells.

Involved in oxygen transport from gills to the various peripheral tissues. The chain is Hemoglobin subunit alpha-1 from Liparis tunicatus (Kelp snailfish).